We begin with the raw amino-acid sequence, 352 residues long: E3 ubiquitin-protein ligase RNF146 (352 aa).

The RING-type zinc finger occupies 36 to 74 (CAICLQTCVHPVSLPCKHVFCYLCVKGASWLGKRCALCR). Glycyl lysine isopeptide (Lys-Gly) (interchain with G-Cter in ubiquitin) cross-links involve residues Lys84 and Lys94. The region spanning 91 to 167 (EELKAASRGN…EHGRRRKIKR (77 aa)) is the WWE domain. Residues Tyr107, Arg110, and Trp114 each contribute to the a glycoprotein site. A Glycyl lysine isopeptide (Lys-Gly) (interchain with G-Cter in ubiquitin) cross-link involves residue Lys130. Positions 144, 153, 163, and 175 each coordinate a glycoprotein. Residue Lys175 forms a Glycyl lysine isopeptide (Lys-Gly) (interchain with G-Cter in ubiquitin) linkage. Disordered regions lie at residues 195–242 (SSAD…AGAS), 259–293 (ERSH…ASSD), and 317–352 (NQTV…VTEV). Residues 197–210 (ADGADSGSAHTGAS) show a composition bias toward low complexity. Over residues 215–233 (VPSSTRPLTSVDGQLTSPV) the composition is skewed to polar residues. Acidic residues predominate over residues 282–293 (STEETESDASSD). Residues Ser288 and Ser292 each carry the phosphoserine modification.

Can form homooligomers. Interacts with PARsylated AXIN1, AXIN2, BLZF1, CASC3, H1-2, IPO7, LIG3, NCL, PARP1, XRCC1, XRCC5 and XRCC6. Interacts with DDB1, DHX15, IQGAP1, LRPPRC, PARP2, PRKDC, RUVBL2, TNKS1 and TNKS2. Binding often leads to interactor ubiquitination, in the presence of the appropriate E1 and E2 enzymes, and proteasomal degradation. In terms of processing, ubiquitinated; autoubiquitinated. Autoubiquitination is enhanced upon poly(ADP-ribose)-binding.

The protein localises to the cytoplasm. It is found in the cytosol. Its subcellular location is the nucleus. It catalyses the reaction S-ubiquitinyl-[E2 ubiquitin-conjugating enzyme]-L-cysteine + [acceptor protein]-L-lysine = [E2 ubiquitin-conjugating enzyme]-L-cysteine + N(6)-ubiquitinyl-[acceptor protein]-L-lysine.. Its pathway is protein modification; protein ubiquitination. Functionally, E3 ubiquitin-protein ligase that specifically binds poly-ADP-ribosylated (PARsylated) proteins and mediates their ubiquitination and subsequent degradation. May regulate many important biological processes, such as cell survival and DNA damage response. Acts as an activator of the Wnt signaling pathway by mediating the ubiquitination of PARsylated AXIN1 and AXIN2, 2 key components of the beta-catenin destruction complex. Acts in cooperation with tankyrase proteins (TNKS and TNKS2), which mediate PARsylation of target proteins AXIN1, AXIN2, BLZF1, CASC3, TNKS and TNKS2. Recognizes and binds tankyrase-dependent PARsylated proteins via its WWE domain and mediates their ubiquitination, leading to their degradation. Different ubiquitin linkage types have been observed: TNKS2 undergoes ubiquitination at 'Lys-48' and 'Lys-63', while AXIN1 is only ubiquitinated at 'Lys-48'. May regulate TNKS and TNKS2 subcellular location, preventing aggregation at a centrosomal location. Neuroprotective protein. Protects the brain against N-methyl-D-aspartate (NMDA) receptor-mediated glutamate excitotoxicity and ischemia, by interfering with PAR-induced cell death, called parthanatos. Prevents nuclear translocation of AIFM1 in a PAR-binding dependent manner. Does not affect PARP1 activation. Protects against cell death induced by DNA damaging agents, such as N-methyl-N-nitro-N-nitrosoguanidine (MNNG) and rescues cells from G1 arrest. Promotes cell survival after gamma-irradiation. Facilitates DNA repair. The protein is E3 ubiquitin-protein ligase RNF146 (Rnf146) of Rattus norvegicus (Rat).